We begin with the raw amino-acid sequence, 247 residues long: Probable transcriptional regulatory protein Swit_2142 (247 aa).

Over residues 1–14 the composition is skewed to basic residues; the sequence is MAGHSKFKNIMHRK. The disordered stretch occupies residues 1 to 21; that stretch reads MAGHSKFKNIMHRKGAQDKKR.

Belongs to the TACO1 family.

The protein resides in the cytoplasm. The sequence is that of Probable transcriptional regulatory protein Swit_2142 from Rhizorhabdus wittichii (strain DSM 6014 / CCUG 31198 / JCM 15750 / NBRC 105917 / EY 4224 / RW1) (Sphingomonas wittichii).